We begin with the raw amino-acid sequence, 465 residues long: U4/U6 small nuclear ribonucleoprotein PRP4 (465 aa).

WD repeat units follow at residues 173-212 (VSTK…PLTQ), 216-256 (SHVG…GGLR), 263-302 (GHER…ELLL), 305-344 (GHDK…KVMT), 347-386 (GHSK…EGQL), 391-432 (AHRN…KMGS), and 435-464 (GHTD…IKLW).

As to quaternary structure, component of the U4/U6-U5 tri-snRNP complex composed of the U4, U6 and U5 snRNAs and at least PRP3, PRP4, PRP6, PRP8, PRP18, PRP31, PRP38, SNU13, SNU23, SNU66, SNU114, SPP381, SMB1, SMD1, SMD2, SMD3, SMX2, SMX3, LSM2, LSM3, LSM4, LSM5, LSM6, LSM7, LSM8, BRR2 and DIB1.

The protein resides in the nucleus. Functionally, involved in RNA splicing. Is required for the association of U4/U6 snRNP with U5 snRNP in an early step of spliceosome assembly. This chain is U4/U6 small nuclear ribonucleoprotein PRP4 (PRP4), found in Saccharomyces cerevisiae (strain ATCC 204508 / S288c) (Baker's yeast).